The chain runs to 233 residues: MSVLNTKINTSPRAYMLVKERGPFVIDVTVTPNTNFPYSYAITNTMSINLDSSYSDKNISWKSESGNTRITITGSVNSTESYLFLIKSDIEQNVTINIKNRNSSTTTTTNASSSDSSMYNTTRSTQRRVTYDDDDDEYDDKNYFGWSSSNGISDNITTSKFSEIFKKFSLLQWVLVAALAFFMYYFLWKKNRRGSDDYTTGSVYDMPLIDTPIRDSYRLPQSFKRDALYRTSI.

7 N-linked (GlcNAc...) asparagine; by host glycosylation sites follow: N58, N77, N93, N102, N110, N120, and N155. A compositionally biased stretch (low complexity) spans 102 to 124; the sequence is NSSTTTTTNASSSDSSMYNTTRS. Residues 102-132 form a disordered region; the sequence is NSSTTTTTNASSSDSSMYNTTRSTQRRVTYD. Residues 168–188 traverse the membrane as a helical segment; sequence FSLLQWVLVAALAFFMYYFLW.

Belongs to the ascovirus HvAv ORF58 family.

The protein localises to the membrane. This is an uncharacterized protein from Trichoplusia ni ascovirus 2c (TnAV-2c).